A 1155-amino-acid polypeptide reads, in one-letter code: MHC class II transactivator (1155 aa).

Positions 171–210 (AYANIAELDQYVFQDTQLEGLSKDLFIEHIGAEEGFGENI) are required for acetyltransferase activity. Disordered stretches follow at residues 217–237 (GQKP…KHRK) and 297–357 (SLSI…IKLP). Basic and acidic residues predominate over residues 224 to 233 (RFPEEHAMDS). An NACHT domain is found at 439-749 (QVVAVLGKAG…CFLGAVWLAQ (311 aa)). Position 445–452 (445–452 (GKAGQGKS)) interacts with GTP. LRR repeat units lie at residues 1010-1033 (SLQH…SKLS), 1041-1062 (ALET…KLAE), 1070-1091 (SLLR…SLAQ), and 1098-1119 (SLRV…QLAS).

As to quaternary structure, interacts with ZXDA and ZXDC. Interacts with PML (isoform PML-2). Interacts with TAF7; interaction inhibits CIITA acetyltransferase activity, thereby repressing transcription. In terms of processing, autophosphorylated, affecting interaction with TAF7. As to expression, expressed at very high levels in dendritic cells, at very low levels in spleen and thymus and is not detected in other tissues. Detected at high levels in spleen and tonsil as well as in a number of B-lymphocyte cell lines, and at very low levels in dendritic cells.

Its subcellular location is the nucleus. It localises to the PML body. The enzyme catalyses L-seryl-[protein] + ATP = O-phospho-L-seryl-[protein] + ADP + H(+). It carries out the reaction L-threonyl-[protein] + ATP = O-phospho-L-threonyl-[protein] + ADP + H(+). In terms of biological role, essential for transcriptional activity of the HLA class II promoter; activation is via the proximal promoter. Does not bind DNA. May act in a coactivator-like fashion through protein-protein interactions by contacting factors binding to the proximal MHC class II promoter, to elements of the transcription machinery, or both. Alternatively it may activate HLA class II transcription by modifying proteins that bind to the MHC class II promoter. Also mediates enhanced MHC class I transcription, the promoter element requirements for CIITA-mediated transcription are distinct from those of constitutive MHC class I transcription, and CIITA can functionally replace TAF1 at these genes. Activates CD74 transcription. Exhibits intrinsic GTP-stimulated acetyltransferase activity. Exhibits serine/threonine protein kinase activity: phosphorylates the TFIID component TAF7, the RAP74 subunit of the general transcription factor TFIIF, histone H2B at 'Ser-37' and other histones. The chain is MHC class II transactivator from Mus musculus (Mouse).